A 619-amino-acid polypeptide reads, in one-letter code: UPF0329 protein ECU01_0100/ECU01_1510/ECU08_0030 (619 aa).

Basic and acidic residues predominate over residues 350 to 384 (REEREKREKREKREESKGRGKRGAGEAKEESKEED). Positions 350-428 (REEREKREKR…GKRKGDGHHY (79 aa)) are disordered. Over residues 385 to 399 (GKEEEGVEAEEEESA) the composition is skewed to acidic residues. The span at 411–428 (ARRKKSLKGKRKGDGHHY) shows a compositional bias: basic residues.

It belongs to the UPF0329 family.

This chain is UPF0329 protein ECU01_0100/ECU01_1510/ECU08_0030, found in Encephalitozoon cuniculi (strain GB-M1) (Microsporidian parasite).